We begin with the raw amino-acid sequence, 243 residues long: uncharacterized protein (243 aa).

The first 19 residues, 1-19 (MKSLPLLGILAFAANRLSA), serve as a signal peptide directing secretion. Residues N112 and N206 are each glycosylated (N-linked (GlcNAc...) asparagine).

This is an uncharacterized protein from Encephalitozoon cuniculi (strain GB-M1) (Microsporidian parasite).